We begin with the raw amino-acid sequence, 286 residues long: Secretory carrier-associated membrane protein 2 (286 aa).

2 stretches are compositionally biased toward basic and acidic residues: residues 1-10 and 54-63; these read MAGRYDRNPF and STKDMKKKEK. Positions 1–63 are disordered; sequence MAGRYDRNPF…STKDMKKKEK (63 aa). Residues 1-126 lie on the Cytoplasmic side of the membrane; it reads MAGRYDRNPF…LQRMQYLAFS (126 aa). A coiled-coil region spans residues 52 to 89; sequence LDSTKDMKKKEKELQAKEAELNKRESELRRREEAASRA. 4 helical membrane-spanning segments follow: residues 127–147, 152–172, 189–209, and 237–257; these read SLLG…AAWI, VMIW…AYVL, FGWF…SAVA, and IFYF…VVVI. The Cytoplasmic segment spans residues 258–286; it reads QQVYMYFRGSGKAAEMKREAARGAMRSAF.

This sequence belongs to the SCAMP family.

Its subcellular location is the cell membrane. It localises to the cytoplasmic vesicle. It is found in the secretory vesicle membrane. Functionally, probably involved in membrane trafficking. This is Secretory carrier-associated membrane protein 2 (SCAMP2) from Oryza sativa subsp. japonica (Rice).